The primary structure comprises 902 residues: MKVIYIYLLLLLVCKFLFVKSSCSLKVGKIECTKELETFLLYNETVVNVKMDTNGVKYYFNALEFPYKNLLCDLNIDIKFTPEIPSFPNIPTTGGDFGFTFNFPCDYRRRVKRIEIERTILSLSFDTSKNQFVTYLNPGCGPFNISSSGIQILSTTYETGAIPNVPILDDDKGILTIQGSNLYNTSIKIYSNNILKDTNPSGALDASHSSVTFSAEEFLTPNNWTIEVSICGSFYKSYSFPYFPKLDKMEGVLNDNGGNMVFTGKHLRPKHNVTGTFGNKTIECLTSNSSKSITCTIPSRKNYGFLGYDIPVTITIDGEYKSNTIKISYDLPLIQSVSQRGNSQIFDVTGVYFSGVKNMTVITGKNMKTDIIQKKTATLEEPGFFIESNYTIFIFLPNNTQPGFMNLVVGDGGSETFTSPRYNFKITPTITAGQTFNSTTSGNDLEIKGIFMRTVDSDGRDVPLTVNSGSGGLVCNPLKDGDGLLFTCVLGPGFGSSHTMNVYYNLIPIGSFTVSYNPPYLGTSEQEKDGTIKMNGKDLGESVKDSIMTVVYSDGNTVNGTVIKSSHTSLIFRYPIGNRNTASYIFQLGDQKSNKAGPFTLKPIIENTDPAVPCGGGVVTINGHYFFNYTKDTTTITIGKVPCNISSISETTIECVIVPNLRSLSPYYTSGTKPLVISSSNPGTEKVYQLTPAGLNYKFAPPTITNTSAIDQTALITIYGTSFGDANLEILINDKPCTQPEINIHTYSSLTCNVTNYDEMKIYNYSNTKFNISISVDGQYFIADIFQFKYESGIIYSENKSTGFPNEMYLGFVVFVIFIALISFAAKNQIEKYFEERKSRKAFRSLDNLRLKLRQKHATEIAKHYTFGEQSAPKPDKSTFYDIRKKLSRLPLIRRCFKEHTD.

Positions Met1–Ser24 are cleaved as a signal peptide. The Extracellular segment spans residues Leu25–Gly803. N-linked (GlcNAc...) asparagine glycosylation is found at Asn43, Asn144, Asn184, Asn223, Asn272, Asn279, Asn288, Asn358, Asn389, Asn398, Asn437, Asn559, Asn628, Asn644, Asn706, Asn753, Asn764, Asn771, and Asn799. Residues Met249–Asn323 enclose the IPT/TIG 1 domain. IPT/TIG domains lie at Pro603 to Ser680 and Ile704 to Phe788. Residues Phe804–Phe824 traverse the membrane as a helical segment. The Cytoplasmic portion of the chain corresponds to Ala825–Asp902.

The protein localises to the cell membrane. In terms of biological role, tgrB1 and tgrC1 are involved in kin discrimination. They play an essential role in aggregation and subsequent development. This Dictyostelium discoideum (Social amoeba) protein is Tiger protein B1 (tgrB1).